Reading from the N-terminus, the 201-residue chain is 3-isopropylmalate dehydratase small subunit (201 aa).

Belongs to the LeuD family. LeuD type 1 subfamily. Heterodimer of LeuC and LeuD.

It catalyses the reaction (2R,3S)-3-isopropylmalate = (2S)-2-isopropylmalate. The protein operates within amino-acid biosynthesis; L-leucine biosynthesis; L-leucine from 3-methyl-2-oxobutanoate: step 2/4. Functionally, catalyzes the isomerization between 2-isopropylmalate and 3-isopropylmalate, via the formation of 2-isopropylmaleate. The sequence is that of 3-isopropylmalate dehydratase small subunit from Rhodopseudomonas palustris (strain ATCC BAA-98 / CGA009).